The sequence spans 293 residues: Glycine betaine-binding protein OpuAC (293 aa).

A signal peptide spans 1–20 (MLKKIIGIGVSAMLALSLAA). Cys-21 carries N-palmitoyl cysteine lipidation. A lipid anchor (S-diacylglycerol cysteine) is attached at Cys-21.

The complex is composed of two ATP-binding proteins (OpuAA), two transmembrane proteins (OpuAB) and a solute-binding protein (OpuAC). Interacts with FloT.

The protein localises to the cell membrane. The protein resides in the membrane raft. Functionally, involved in a multicomponent binding-protein-dependent transport system for glycine betaine. This is Glycine betaine-binding protein OpuAC (opuAC) from Bacillus subtilis (strain 168).